A 114-amino-acid chain; its full sequence is Nucleoid-associated protein THEYE_A1069 (114 aa).

It belongs to the YbaB/EbfC family. Homodimer.

The protein localises to the cytoplasm. It localises to the nucleoid. Its function is as follows. Binds to DNA and alters its conformation. May be involved in regulation of gene expression, nucleoid organization and DNA protection. The chain is Nucleoid-associated protein THEYE_A1069 from Thermodesulfovibrio yellowstonii (strain ATCC 51303 / DSM 11347 / YP87).